A 421-amino-acid polypeptide reads, in one-letter code: Enolase (421 aa).

Position 161 (glutamine 161) interacts with (2R)-2-phosphoglycerate. The active-site Proton donor is the glutamate 203. Aspartate 240, glutamate 283, and aspartate 310 together coordinate Mg(2+). Residues lysine 335, arginine 364, serine 365, and lysine 386 each coordinate (2R)-2-phosphoglycerate. Lysine 335 acts as the Proton acceptor in catalysis.

The protein belongs to the enolase family. It depends on Mg(2+) as a cofactor.

Its subcellular location is the cytoplasm. It is found in the secreted. The protein localises to the cell surface. It carries out the reaction (2R)-2-phosphoglycerate = phosphoenolpyruvate + H2O. The protein operates within carbohydrate degradation; glycolysis; pyruvate from D-glyceraldehyde 3-phosphate: step 4/5. In terms of biological role, catalyzes the reversible conversion of 2-phosphoglycerate (2-PG) into phosphoenolpyruvate (PEP). It is essential for the degradation of carbohydrates via glycolysis. This is Enolase from Sulfurimonas denitrificans (strain ATCC 33889 / DSM 1251) (Thiomicrospira denitrificans (strain ATCC 33889 / DSM 1251)).